The following is a 203-amino-acid chain: Ribosomal RNA large subunit methyltransferase E (203 aa).

Residues Gly-51, Trp-53, Asp-69, Asp-85, and Asp-108 each coordinate S-adenosyl-L-methionine. Residue Lys-148 is the Proton acceptor of the active site.

This sequence belongs to the class I-like SAM-binding methyltransferase superfamily. RNA methyltransferase RlmE family.

Its subcellular location is the cytoplasm. It carries out the reaction uridine(2552) in 23S rRNA + S-adenosyl-L-methionine = 2'-O-methyluridine(2552) in 23S rRNA + S-adenosyl-L-homocysteine + H(+). Functionally, specifically methylates the uridine in position 2552 of 23S rRNA at the 2'-O position of the ribose in the fully assembled 50S ribosomal subunit. This Methanocorpusculum labreanum (strain ATCC 43576 / DSM 4855 / Z) protein is Ribosomal RNA large subunit methyltransferase E.